Here is a 438-residue protein sequence, read N- to C-terminus: Transcriptional regulator Mb0495 (438 aa).

Residues 1 to 12 show a composition bias toward polar residues; that stretch reads MYSTNRTSQSLS. The segment at 1–22 is disordered; sequence MYSTNRTSQSLSRKPGRKHQLR. The segment at residues 52-73 is a DNA-binding region (H-T-H motif); it reads VGRDVIAGSTSLSIATVNRQVI.

The protein belongs to the ROK (NagC/XylR) family.

In terms of biological role, positively regulates the expression of PE13 and PPE18. The protein is Transcriptional regulator Mb0495 of Mycobacterium bovis (strain ATCC BAA-935 / AF2122/97).